The chain runs to 72 residues: uncharacterized protein (72 aa).

Its subcellular location is the plastid. It localises to the chloroplast. This is an uncharacterized protein from Oenothera berteroana (Bertero's evening primrose).